Reading from the N-terminus, the 312-residue chain is Protein ABIL2 (312 aa).

The tract at residues 173–287 is disordered; that stretch reads TIRETPPPPV…TEQQQPSKSK (115 aa). Positions 183 to 199 are enriched in low complexity; that stretch reads RKSTSQSSSPRQPPQRS. Residues 230–251 are compositionally biased toward polar residues; that stretch reads SVATRKSASISRPTTPSKSRSI. Basic and acidic residues predominate over residues 269–279; it reads AFEKDNQKETE.

Belongs to the ABI family. Binds SCAR.

The protein localises to the cytoplasm. It is found in the cytoskeleton. Involved in regulation of actin and microtubule organization. Part of a WAVE complex that activates the Arp2/3 complex. The protein is Protein ABIL2 (ABIL2) of Arabidopsis thaliana (Mouse-ear cress).